The chain runs to 161 residues: MSIVTKSIVNADAEARYLSPGELDRIKSFAASGERRLRIAQILTDNRERIVREAGQQLFQKRPDIVSPGGNAYGEEMTATCLRDLDYYLRLVTYGVVAGDATPIEEIGLVGVKEMYNSLGTPVAAVAEGVRSAKSVATGLLSGDDAAEAGSYFDYVIAALQ.

Asparagine 71 carries the N4-methylasparagine modification. Cysteine 81 serves as a coordination point for (2R,3E)-phycocyanobilin.

The protein belongs to the phycobiliprotein family. Heterodimer of an alpha and a beta chain. In terms of processing, contains one covalently linked phycocyanobilin chromophore.

The protein resides in the plastid. Its subcellular location is the cyanelle thylakoid membrane. Its function is as follows. Light-harvesting photosynthetic bile pigment-protein from the phycobiliprotein complex. Allophycocyanin has a maximum absorption at approximately 650 nanometers. In Cyanophora paradoxa, this protein is Allophycocyanin alpha chain (apcA).